Reading from the N-terminus, the 125-residue chain is Small ribosomal subunit protein uS13 (125 aa).

The protein belongs to the universal ribosomal protein uS13 family. In terms of assembly, part of the 30S ribosomal subunit. Forms a loose heterodimer with protein S19. Forms two bridges to the 50S subunit in the 70S ribosome.

In terms of biological role, located at the top of the head of the 30S subunit, it contacts several helices of the 16S rRNA. In the 70S ribosome it contacts the 23S rRNA (bridge B1a) and protein L5 of the 50S subunit (bridge B1b), connecting the 2 subunits; these bridges are implicated in subunit movement. Contacts the tRNAs in the A and P-sites. The polypeptide is Small ribosomal subunit protein uS13 (Granulibacter bethesdensis (strain ATCC BAA-1260 / CGDNIH1)).